Reading from the N-terminus, the 971-residue chain is Mating-type switching protein swi1 (971 aa).

Phosphoserine is present on residues Ser-528, Ser-536, and Ser-970.

As to quaternary structure, fork protection complex (FPC) consisting of swi1 and swi3 interacts with mat1 cis-acting sequences and mat1-proximal polar-terminator of replication (RTS1).

Its subcellular location is the nucleus. Forms a fork protection complex (FPC) with swi3. FPC coordinates leading and lagging strand synthesis and moves with the replication fork. It is required for programmed fork-pausing which is necessary for mating-type switching. FPC stabilizes replication forks in a configuration that is recognized by replication checkpoint sensors. It is involved in termination at the mat1-proximal polar-terminator of replication (RTS1) and also required for activation of the Rad53-like checkpoint kinase cds1. The polypeptide is Mating-type switching protein swi1 (swi1) (Schizosaccharomyces pombe (strain 972 / ATCC 24843) (Fission yeast)).